The following is a 132-amino-acid chain: Fatty acid-binding protein type 3 (132 aa).

The protein belongs to the calycin superfamily. Fatty-acid binding protein (FABP) family.

The polypeptide is Fatty acid-binding protein type 3 (Fasciola hepatica (Liver fluke)).